We begin with the raw amino-acid sequence, 495 residues long: Probable cytosol aminopeptidase (495 aa).

Residues lysine 266 and aspartate 271 each coordinate Mn(2+). The active site involves lysine 278. Residues aspartate 289, aspartate 348, and glutamate 350 each coordinate Mn(2+). Residue arginine 352 is part of the active site.

It belongs to the peptidase M17 family. The cofactor is Mn(2+).

The protein localises to the cytoplasm. The catalysed reaction is Release of an N-terminal amino acid, Xaa-|-Yaa-, in which Xaa is preferably Leu, but may be other amino acids including Pro although not Arg or Lys, and Yaa may be Pro. Amino acid amides and methyl esters are also readily hydrolyzed, but rates on arylamides are exceedingly low.. The enzyme catalyses Release of an N-terminal amino acid, preferentially leucine, but not glutamic or aspartic acids.. Its function is as follows. Presumably involved in the processing and regular turnover of intracellular proteins. Catalyzes the removal of unsubstituted N-terminal amino acids from various peptides. The polypeptide is Probable cytosol aminopeptidase (Pseudomonas paraeruginosa (strain DSM 24068 / PA7) (Pseudomonas aeruginosa (strain PA7))).